A 452-amino-acid polypeptide reads, in one-letter code: Serine carboxypeptidase-like 26 (452 aa).

A signal peptide spans M1–C20. Residues N52 and N138 are each glycosylated (N-linked (GlcNAc...) asparagine). Intrachain disulfides connect C87–C338, C244–C256, and C280–C306. S180 is a catalytic residue. N327 is a glycosylation site (N-linked (GlcNAc...) asparagine). Residues D375 and H427 contribute to the active site.

This sequence belongs to the peptidase S10 family. Ubiquitous.

The protein localises to the secreted. In terms of biological role, probable carboxypeptidase. The polypeptide is Serine carboxypeptidase-like 26 (SCPL26) (Arabidopsis thaliana (Mouse-ear cress)).